A 135-amino-acid polypeptide reads, in one-letter code: C-type lectin APL (135 aa).

4 disulfides stabilise this stretch: Cys3-Cys14, Cys31-Cys131, Cys38-Cys133, and Cys106-Cys123. A C-type lectin domain is found at Met10–Gln132. Gln96, Asp98, Glu104, Asn119, and Asp120 together coordinate Ca(2+). The Galactose-binding motif lies at Gln96–Asp98.

Belongs to the true venom lectin family. Homodimer; disulfide-linked. As to expression, expressed by the venom gland.

It localises to the secreted. Its function is as follows. Beta-galactoside lectin that agglutinates rabbit and human erythrocytes in a calcium-dependent fashion (MHC is 0.21 ug/ml on rabbit erythrocytes). Galactose (15 mM), lactose (20 mM), rhamnose (20 mM) and EGTA strongly inhibit this activity. In Agkistrodon piscivorus piscivorus (Eastern cottonmouth), this protein is C-type lectin APL.